We begin with the raw amino-acid sequence, 157 residues long: Transcription initiation factor IIA large subunit (157 aa).

It belongs to the TFIIA subunit 1 family. TFIIA is a heterodimer of the large subunit and the small subunit gamma.

The protein resides in the nucleus. Functionally, TFIIA is a component of the transcription machinery of RNA polymerase II and plays an important role in transcriptional activation. This is Transcription initiation factor IIA large subunit (TOA1) from Encephalitozoon cuniculi (strain GB-M1) (Microsporidian parasite).